The primary structure comprises 286 residues: 4-hydroxybenzoate octaprenyltransferase (286 aa).

Transmembrane regions (helical) follow at residues 20 to 40 (IGTF…AGGM), 43 to 63 (LKVL…GCII), 95 to 115 (ILFV…NPLV), 116 to 136 (VQLS…KRFT), 142 to 162 (FLGV…LGTV), 167 to 187 (WWLF…YAMV), 210 to 230 (QIIG…GLSA), and 235 to 255 (VFAL…KLIF).

The protein belongs to the UbiA prenyltransferase family. Mg(2+) serves as cofactor.

The protein resides in the cell inner membrane. It catalyses the reaction all-trans-octaprenyl diphosphate + 4-hydroxybenzoate = 4-hydroxy-3-(all-trans-octaprenyl)benzoate + diphosphate. It functions in the pathway cofactor biosynthesis; ubiquinone biosynthesis. Catalyzes the prenylation of para-hydroxybenzoate (PHB) with an all-trans polyprenyl group. Mediates the second step in the final reaction sequence of ubiquinone-8 (UQ-8) biosynthesis, which is the condensation of the polyisoprenoid side chain with PHB, generating the first membrane-bound Q intermediate 3-octaprenyl-4-hydroxybenzoate. This Shewanella loihica (strain ATCC BAA-1088 / PV-4) protein is 4-hydroxybenzoate octaprenyltransferase.